A 416-amino-acid chain; its full sequence is MSKADIVVGIQWGDEGKGKIVDKLCENYDYVCRSAGGHNAGHTIWVDGIRYALHLMPSGVLNKQCINVIGNGVVVNPDVLISEMAQFENLEGRLFISDRAHLNLNHHALIDQARERLKGDKAIGTTGKGIGPSYEDKISRNGHRVGELLEPEKLCENLMKDFELKKTYFDVLGIAMPSYDEILKDLKRFKEVLAPYITDTTRMLWKALDEDKKVLLEGAQGSMLDIDHGTYPYVTSSTTISAGALSGLGLNPKEIGKVIGIVKAYTTRVGNGAFPSEDLGEDGEKIGLIGKEIGVSTGRKRRCGWFDAVAVRYTARLNGLDTLSLMKLDVLDGFESVKICKAYEYKGQEIDYVPCDLENAKPIYEVMEGWDKVAGIRDYDLLPENAKKYIKRLEELSGVKVGYISTSPEREDTIIL.

Residues 13–19 and 41–43 contribute to the GTP site; these read GDEGKGK and GHT. The Proton acceptor role is filled by D14. Mg(2+) contacts are provided by D14 and G41. IMP contacts are provided by residues 14-17, 39-42, T126, R140, Q220, T235, and R299; these read DEGK and NAGH. H42 acts as the Proton donor in catalysis. Residue 295–301 participates in substrate binding; it reads VSTGRKR. Residues R301, 327 to 329, and 405 to 407 contribute to the GTP site; these read KLD and STS.

This sequence belongs to the adenylosuccinate synthetase family. In terms of assembly, homodimer. Mg(2+) is required as a cofactor.

The protein localises to the cytoplasm. The enzyme catalyses IMP + L-aspartate + GTP = N(6)-(1,2-dicarboxyethyl)-AMP + GDP + phosphate + 2 H(+). It participates in purine metabolism; AMP biosynthesis via de novo pathway; AMP from IMP: step 1/2. Its function is as follows. Plays an important role in the de novo pathway of purine nucleotide biosynthesis. Catalyzes the first committed step in the biosynthesis of AMP from IMP. The sequence is that of Adenylosuccinate synthetase from Campylobacter lari (strain RM2100 / D67 / ATCC BAA-1060).